A 311-amino-acid polypeptide reads, in one-letter code: Glutaminase (311 aa).

Residues Ser66, Asn116, Glu162, Asn169, Tyr193, Tyr245, and Val263 each contribute to the substrate site.

It belongs to the glutaminase family. As to quaternary structure, homotetramer.

The catalysed reaction is L-glutamine + H2O = L-glutamate + NH4(+). The protein is Glutaminase of Rhodopseudomonas palustris (strain ATCC BAA-98 / CGA009).